The following is a 232-amino-acid chain: Protein fmp52-1, mitochondrial (232 aa).

The transit peptide at 1–36 directs the protein to the mitochondrion; that stretch reads MASVALIGCTGMVGSHILTSLLAHPSVARVDTISRR.

Belongs to the FMP52 family.

It is found in the mitochondrion outer membrane. This Aspergillus terreus (strain NIH 2624 / FGSC A1156) protein is Protein fmp52-1, mitochondrial (fmp521).